A 100-amino-acid chain; its full sequence is Protein SAMBA (100 aa).

The interval 1 to 40 (MNGASPAHSLVSTTAVAGGGGSSGAAAGLDDFHFPPDIPS) is disordered.

As to quaternary structure, interacts with CDC27B and CYCA2-3. In terms of tissue distribution, expressed in embryos, germinating seeds, hypocotyls and pollen grains.

In terms of biological role, plays an important role in organ size control. Acts as negative regulator of the anaphase-promoting complex/cyclosome (APC/C). Regulates cell proliferation during early development by targeting CYCA2-3 for APC/C-mediated degradation. Required for mitosis I during pollen microspore development. The chain is Protein SAMBA from Arabidopsis thaliana (Mouse-ear cress).